A 247-amino-acid chain; its full sequence is MKISIFFAFLGAAVALPVNDDDKIVGGYTCPKHLVPYQVSLHDGISHQCGGSLISDQWVLSAAHCYKRKLQVRLGEHNIHVLEGGEQFIDAEKIIRHPEYNKDTLDNDIMLIKLKSPAVLNSQVSTVSLPRSCASTDAQCLVSGWGNTVSIGGKYPALLQCLEAPVLSASSCKKSYPGQITSNMFCLGFLEGGKDSCDGDSGGPVVCNGEIQGIVSWGSVCAMRGKPGVYTKVCNYLSWIQETMANN.

The first 15 residues, 1–15, serve as a signal peptide directing secretion; that stretch reads MKISIFFAFLGAAVA. Positions 16–23 are cleaved as a propeptide — activation peptide; sequence LPVNDDDK. A Peptidase S1 domain is found at 24-245; that stretch reads IVGGYTCPKH…YLSWIQETMA (222 aa). Cystine bridges form between Cys-30-Cys-161, Cys-49-Cys-65, Cys-133-Cys-234, Cys-140-Cys-207, Cys-172-Cys-186, and Cys-197-Cys-221. His-64 (charge relay system) is an active-site residue. Residues Glu-76, Asn-78, Val-81, and Glu-86 each coordinate Ca(2+). The active-site Charge relay system is the Asp-108. The active-site Charge relay system is Ser-201.

The protein belongs to the peptidase S1 family. Ca(2+) is required as a cofactor. Proteolytically cleaved and activated by an autocatalytic mechanism. Cleavage by CTRC inhibits autoactivation.

It is found in the secreted. Its subcellular location is the extracellular space. It carries out the reaction Preferential cleavage: Arg-|-Xaa, Lys-|-Xaa.. Its activity is regulated as follows. Activated by autocatalytic cleavage. Cleavage by CTRC inhibits autoactivation. In terms of biological role, serine protease capable of autoactivation. The protein is Trypsin-4 of Rattus norvegicus (Rat).